The sequence spans 175 residues: Probable DNA replication complex GINS protein PSF2 (175 aa).

This sequence belongs to the GINS2/PSF2 family. As to quaternary structure, component of the GINS complex which is a heterotetramer of SLD5, PSF1, PSF2 and PSF3.

It is found in the nucleus. In terms of biological role, the GINS complex plays an essential role in the initiation of DNA replication. The polypeptide is Probable DNA replication complex GINS protein PSF2 (Encephalitozoon cuniculi (strain GB-M1) (Microsporidian parasite)).